The chain runs to 623 residues: NADPH-dependent diflavin oxidoreductase 1 (623 aa).

The 162-residue stretch at 7 to 168 folds into the Flavodoxin-like domain; the sequence is IVILYGSETG…VYFEYEKKVL (162 aa). Residues 13–18, 60–63, 106–115, and aspartate 142 contribute to the FMN site; these read SETGNA, STTG, and LGDSSYPKFN. Residues 224–491 enclose the FAD-binding FR-type domain; sequence ESLKVGRVNI…VGPGVGLAPL (268 aa). FAD-binding positions include arginine 383, 413 to 416, and 445 to 448; these read RYYS and GICT. Residue 538–539 participates in NADP(+) binding; that stretch reads SR. Position 623 (tryptophan 623) interacts with FAD.

The protein belongs to the NADPH-dependent diflavin oxidoreductase NDOR1 family. It in the N-terminal section; belongs to the flavodoxin family. In the C-terminal section; belongs to the flavoprotein pyridine nucleotide cytochrome reductase family. In terms of assembly, interacts with DRE2; as part of the cytosolic iron-sulfur (Fe-S) protein assembly (CIA) machinery. FAD serves as cofactor. It depends on FMN as a cofactor.

It localises to the cytoplasm. It is found in the mitochondrion. It carries out the reaction 2 oxidized [2Fe-2S]-[protein] + NADPH = 2 reduced [2Fe-2S]-[protein] + NADP(+) + H(+). Functionally, NADPH-dependent reductase which is a central component of the cytosolic iron-sulfur (Fe-S) protein assembly (CIA) machinery. Transfers electrons from NADPH via its FAD and FMN prosthetic groups to the [2Fe-2S] cluster of DRE2, another key component of the CIA machinery. In turn, this reduced cluster provides electrons for assembly of cytosolic iron-sulfur cluster proteins. Positively controls H(2)O(2)-induced cell death. This is NADPH-dependent diflavin oxidoreductase 1 from Saccharomyces cerevisiae (strain ATCC 204508 / S288c) (Baker's yeast).